An 89-amino-acid polypeptide reads, in one-letter code: Defensin-like protein 147 (89 aa).

The first 24 residues, 1-24, serve as a signal peptide directing secretion; that stretch reads MKKIFQLSFTVFIIFISLVLGVVG. Cystine bridges form between C34–C82, C46–C66, C51–C79, and C55–C81.

This sequence belongs to the DEFL family. Expressed in flower buds, but not in stems, roots or rosette leaves.

The protein localises to the secreted. The chain is Defensin-like protein 147 (LCR1) from Arabidopsis thaliana (Mouse-ear cress).